The following is a 65-amino-acid chain: White colony protein WHS11 (65 aa).

Residues 1–17 (MSDLGRKDIGDKIESKL) show a composition bias toward basic and acidic residues. The interval 1 to 32 (MSDLGRKDIGDKIESKLTPDSQKSTPEQFKDK) is disordered. Residues 18–27 (TPDSQKSTPE) are compositionally biased toward polar residues.

This sequence to yeast HSP12/GLP1 and S.pombe hsp9.

The protein is White colony protein WHS11 (WHS11) of Candida albicans (strain WO-1) (Yeast).